The primary structure comprises 474 residues: Coiled-coil domain-containing protein 6 (474 aa).

The span at 1-10 (MADSASESDT) shows a compositional bias: acidic residues. The segment at 1–47 (MADSASESDTDGAGGNSSSSAAMQSSCSSTSGGGGGGGGGGGGGKSG) is disordered. Residue Ala2 is modified to N-acetylalanine. Over residues 16–30 (NSSSSAAMQSSCSST) the composition is skewed to low complexity. The span at 31–47 (SGGGGGGGGGGGGGKSG) shows a compositional bias: gly residues. Ser52 carries the phosphoserine modification. Residues 53–237 (PFRLEELTNR…KRILQEKLDQ (185 aa)) are a coiled coil. 3 tandem repeats follow at residues 106–134 (EQEE…AVNY), 135–163 (EKEE…EQHL), and 164–192 (EQEQ…QLTL). Positions 106-235 (EQEEEFISNT…AEKRILQEKL (130 aa)) are 5 X 29 AA tandem repeats. The 4; approximate repeat unit spans residues 193-206 (EQLRREKIDLENTL). Copy 5 of the repeat occupies 207-235 (EQEQEALVNRLWKRMDKLEAEKRILQEKL). Ser240, Ser244, Ser249, Ser254, Ser284, and Ser323 each carry phosphoserine. Residues 253-332 (DSPENMMRHI…SESESSLEMD (80 aa)) adopt a coiled-coil conformation. The interval 342–369 (AQGLRPRTVSSPIPYTPSPSSSRPISPG) is disordered. Thr349 carries the phosphothreonine modification. Over residues 351–368 (SSPIPYTPSPSSSRPISP) the composition is skewed to low complexity. 2 positions are modified to phosphoserine: Ser363 and Ser367. Omega-N-methylarginine is present on Arg387. Ser395 and Ser413 each carry phosphoserine. A disordered region spans residues 397–474 (GLHVQHMGTS…QHSAHPSSQP (78 aa)). Over residues 426–451 (PTPPPSPNTQTPVQPPPPPPPPPMQP) the composition is skewed to pro residues. The SH3-binding motif lies at 442–451 (PPPPPPPMQP). Residues 459–474 (SQPTPSQHSAHPSSQP) show a composition bias toward low complexity.

As to expression, ubiquitously expressed.

The protein resides in the cytoplasm. It is found in the cytoskeleton. This is Coiled-coil domain-containing protein 6 (CCDC6) from Homo sapiens (Human).